The following is a 446-amino-acid chain: Gasdermin-A (446 aa).

A triggers pyroptosis region spans residues 1-252 (MTMFENVTRA…FILIQASDVG (252 aa)). 9–13 (RALAR) contacts a cardiolipin. The next 4 membrane-spanning stretches (beta stranded) occupy residues 78–95 (NFSF…DVDV), 99–120 (VKVK…TLSV), 164–180 (VTLE…SLPF), and 184–198 (LGLQ…AVTI).

It belongs to the gasdermin family. Homooligomer; homooligomeric ring-shaped pore complex containing 18-36 subunits when inserted in the membrane. Cleavage by bacterial SpeB relieves autoinhibition by releasing the N-terminal moiety (Gasdermin-A, N-terminal) that initiates pyroptosis. In terms of processing, palmitoylated. As to expression, expressed predominantly in the gastrointestinal (GI) tract and in the skin at a lower level. In the GI tract, the expression is highly restricted to the esophagus and forestomach.

It is found in the cytoplasm. It localises to the perinuclear region. The protein resides in the cytosol. Its subcellular location is the cell membrane. Its activity is regulated as follows. The full-length protein before cleavage is inactive: intramolecular interactions between N- and C-terminal domains mediate autoinhibition in the absence of activation signal. The intrinsic pyroptosis-inducing activity is carried by the released N-terminal moiety (Gasdermin-A, N-terminal) following cleavage by bacterial effector protein SpeB. Functionally, this form constitutes the precursor of the pore-forming protein and acts as a sensor of bacterial infection: upon infection, specifically cleaved by bacterial effector protein SpeB in epithelial cells, releasing the N-terminal moiety (Gasdermin-A, N-terminal) that binds to membranes and forms pores, triggering pyroptosis. Its function is as follows. Pore-forming protein that causes membrane permeabilization and pyroptosis. Released upon cleavage by bacterial effector protein SpeB, and binds to membrane inner leaflet lipids. Homooligomerizes within the membrane and forms pores of 10-15 nanometers (nm) of inner diameter, triggering pyroptosis. Pyroptosis triggers the elimination of the infected skin cell, depriving the pathogen of its protective niche, while inducing an inflammatory response. This ultimately prevents bacterial penetration of the epithelial barrier and a subsequent systemic dissemination of the pathogen. Binds to cardiolipin and other acidic phospholipids, such as phosphatidylserine, which mediate its targeting to the inner leaflet membrane. In Mus musculus (Mouse), this protein is Gasdermin-A (Gsdma).